A 1196-amino-acid chain; its full sequence is Calcium-activated potassium channel subunit alpha-1 (1196 aa).

Residues 1–52 (MATWNASQIILNSMSNIIESPQSKPRPVMASNGASLFIPVTMEVPCDQGTRM) lie on the Extracellular side of the membrane. A helical membrane pass occupies residues 53–73 (WWAFLASSMVTFFGGLFIILV). Residues 74–146 (WRTFKYLWTV…MISAQTLTGR (73 aa)) are Cytoplasmic-facing. A helical transmembrane segment spans residues 147–167 (VLVVTVFALSIGALMIYFIDS). Topologically, residues 168-182 (SNPIESCQNFYKDFT) are extracellular. A helical membrane pass occupies residues 183 to 203 (LQIDMAFNIFFLLYFGLRFIA). The Cytoplasmic portion of the chain corresponds to 204–207 (ANDK). A helical transmembrane segment spans residues 208–228 (LWFWLEVNSVVDFFTVPPVFV). Over 229–232 (SVYL) the chain is Extracellular. The chain crosses the membrane as a helical; Voltage-sensor span at residues 233 to 253 (NRSWLGLRFLRALRLIQFSEI). Residues 254–268 (LQFLNILKTSNSIKL) lie on the Cytoplasmic side of the membrane. A helical transmembrane segment spans residues 269–289 (VNLCSIFISTWLTAAGFIHLV). At 290–303 (ENSGDPWRNFENSQ) the chain is on the extracellular side. The segment at residues 304-326 (DLSYWECMYLLMVTMSTVGYGDV) is an intramembrane region (pore-forming). Residues 320-323 (TVGY) carry the Selectivity for potassium motif. The Extracellular segment spans residues 327–335 (YAKTTLGRL). Residues 336–356 (FMVFFILGGLAMFASYVPEII) form a helical membrane-spanning segment. Residues 357–1196 (ELIGNRKKYG…PPIREVEDEC (840 aa)) lie on the Cytoplasmic side of the membrane. In terms of domain architecture, RCK N-terminal 1 spans 375 to 517 (RKHIVVCGHI…WNWKDGDDAI (143 aa)). Mg(2+)-binding residues include Glu-407, Gln-430, and Glu-432. Positions 524-544 (LGFIAQSCLAQGLSTMLANLF) are segment S7. Positions 581-601 (LSFPAVCELCFVKLKLLMIAI) are segment S8. Positions 645 to 649 (CKACH) are heme-binding motif. Positions 672 to 697 (SALSPKKKQRNGGMRHSPNTSPNMMR) are disordered. The tract at residues 748–768 (VLSGHVVVCIFGDMTSALIGV) is segment S9. The RCK N-terminal 2 domain maps to 750–894 (SGHVVVCIFG…MERSSPDNSP (145 aa)). The Calcium bowl motif lies at 914 to 936 (TELVNDSNVQFLDQDDDDDPDTE). Positions 923, 926, 929, and 931 each coordinate Ca(2+). Residues 943–963 (FACGTAFAVSVLDSLMSATYF) form a segment S10 region. Residues 1098 to 1119 (ASLSHSSHSSHSSSKKSSSVTS) show a composition bias toward low complexity. Residues 1098–1149 (ASLSHSSHSSHSSSKKSSSVTSILHTASANRQNRVKARDSRDKQKMGQAEKK) form a disordered region. Over residues 1120–1129 (ILHTASANRQ) the composition is skewed to polar residues. Positions 1133–1149 (KARDSRDKQKMGQAEKK) are enriched in basic and acidic residues.

It belongs to the potassium channel family. Calcium-activated (TC 1.A.1.3) subfamily. KCa1.1/KCNMA1 sub-subfamily. In terms of assembly, homotetramer; which constitutes the calcium-activated potassium channel. Expressed in both the somites and neural tube of 1 day embryos. Within the nervous system, it is restricted to dorsal parts, and expressed centrally in regions dedicated to processing of sensory information. Six hours later, it is expressed segmentally within the somites. At this time, it is expressed in a primary sensory organ, the trigeminal ganglion. By 2 days, it is also expressed in other primary sensory organs, such as the otic vesicle, and the eye. Within the retina, it is expressed to an internal layer. In the developing otic vesicle, it is abundantly expressed near the apical surface. Isoform 3 is neural-specific, and is only expressed during late stages of neuronal differentiation.

The protein localises to the cell membrane. It catalyses the reaction K(+)(in) = K(+)(out). With respect to regulation, ethanol and carbon monoxide-bound heme increase channel activation. Heme inhibits channel activation. Potassium channel activated by both membrane depolarization or increase in cytosolic Ca(2+) that mediates export of K(+). It is also activated by the concentration of cytosolic Mg(2+). Its activation dampens the excitatory events that elevate the cytosolic Ca(2+) concentration and/or depolarize the cell membrane. It therefore contributes to repolarization of the membrane potential. Plays a key role in controlling excitability in a number of systems, such as regulation of the contraction of smooth muscle, the tuning of hair cells in the cochlea, regulation of transmitter release, and innate immunity. In smooth muscles, its activation by high level of Ca(2+), caused by ryanodine receptors in the sarcoplasmic reticulum, regulates the membrane potential. In cochlea cells, its number and kinetic properties partly determine the characteristic frequency of each hair cell and thereby helps to establish a tonotopic map. Highly sensitive to both iberiotoxin (IbTx) and charybdotoxin (CTX). This is Calcium-activated potassium channel subunit alpha-1 (kcnma1) from Xenopus laevis (African clawed frog).